The primary structure comprises 154 residues: Transcriptional repressor NrdR (154 aa).

A zinc finger lies at 3–34 (CPFCGANDTKVIDSRLVAEGEQVRRRRECLAC). The ATP-cone domain maps to 49 to 139 (PRLIKQDGSR…VYRRFQDLNE (91 aa)).

The protein belongs to the NrdR family. Zn(2+) is required as a cofactor.

Functionally, negatively regulates transcription of bacterial ribonucleotide reductase nrd genes and operons by binding to NrdR-boxes. This chain is Transcriptional repressor NrdR, found in Pseudomonas syringae pv. syringae (strain B728a).